The following is a 553-amino-acid chain: MTSEMKKFSKIVLFGLLISPLLASSQTKKDANQKPNIILIMADDLGWTDLSSPNTSLGYGSKYYESPNIDRLAQQGKSFAYAYTQQNCQPTRAALLSGQYATGAQNGVYNVGSLKRASKGVVTPIMPHNQNNYLQEDCVSMFETLKTAGYHTAWFGKFHAIKLGKQAESYMGVDYNVALHKETSATVNGVKVKNEFFAQNDDAKGWMFEIDNLKPYAQPYDAAYLQKVLEPIKNGNNPWLLEGTPKHLTDALGDAVVGYIKDRSKADSPFFAYIPFHAVHVSILPRLDLEAKYKAKKSLDPRHTQADYAAFVELLDQTVGRVLNALEDPNGDGNKADGIAENTMVIFYSDNGGFMGPTNNSPLRLRKGTYYEGGVRVPLIFKYPGVITPNSVNTTQEVHTIDFYPTLAEIAGAKLPSPKVQEMDGKSIASVLREESQVRDDKNELFWHFPGYMDVRNMPQSVIHYRHSDNQHYKLFYRYEDESFELYNLSNDLGETTNLLAENPSQQTLDLALKMNNKLRAWLIKNNAPTGIWAKNCEKVPYPKKDAVKKYIK.

The first 25 residues, 1 to 25 (MTSEMKKFSKIVLFGLLISPLLASS), serve as a signal peptide directing secretion. Ca(2+)-binding residues include D43, D44, and C88. C88 functions as the Nucleophile in the catalytic mechanism. At C88 the chain carries 3-oxoalanine (Cys). H159 is a catalytic residue. Ca(2+) is bound by residues D350 and N351.

It belongs to the sulfatase family. It depends on Ca(2+) as a cofactor. Post-translationally, the conversion to 3-oxoalanine (also known as C-formylglycine, FGly), of a serine or cysteine residue in prokaryotes and of a cysteine residue in eukaryotes, is critical for catalytic activity. This post-translational modification is severely defective in multiple sulfatase deficiency (MSD).

Its subcellular location is the secreted. In terms of biological role, sulfatase that may be involved in ulvan degradation. Ulvan is the main polysaccharide component of the Ulvales (green seaweed) cell wall. It is composed of disaccharide building blocks comprising 3-sulfated rhamnose (Rha3S) linked to D-glucuronic acid (GlcA), L-iduronic acid (IduA), or D-xylose (Xyl). In Formosa agariphila (strain DSM 15362 / KCTC 12365 / LMG 23005 / KMM 3901 / M-2Alg 35-1), this protein is Sulfatase.